Here is a 1485-residue protein sequence, read N- to C-terminus: MSIDADFSDYEDEASGDENVLPNTTTKRKASTTSSKSRAKKASTPDLRQTSLTSMTASEQIPLVTNNGNGNSNVSTQYQRLTPREHVLRRPDTYIGSIEPTTSEMWVFDSEKNKLDYKAVTYVPGLYKIFDEIIVNAADNKVRDPNMNTLKVTLDPEANVISIYNNGKGIPIEIHDKEKIYIPELIFGNLLTSSNYDDNQKKVTGGRNGYGAKLCNIFSTEFVVETADKERMKKYKQTWYDNMSRKSEPVITSLKKPDEYTKITFKPDLAKFGMDKIDDDMVSIIKRRIYDMAGTVRETKVYLNNERISISGFKKYVEMYLASDTKPDEEPPRVIYEHVNDRWDVAFAVSDGQFKQVSFVNNISTIRGGTHVNYVANKIVDAIDEVVKKENKKAPVKAFQIKNYVQVFVNCQIENPSFDSQTKETLTTKVSAFGSQCTLSDKFLKAIKKSSVVEEVLKFATAKADQQLSKGDGGLRSRITGLTKLEDANKAGTKESHKCVLILTEGDSAKSLAVSGLSVVGRDYYGVFPLRGKLLNVREASHSQILNNKEIQAIKKIMGFTHKKTYTDVKGLRYGHLMIMTDQDHDGSHIKGLIINYLESSYPSLLQIPGFLIQFITPIIKCTRGNQVQAFYTLPEYEYWKEANNNGRGWKIKYYKGLGTSDHDDMKSYFSDLDRHMKYFHAMQEKDAELIEMAFAKKKADVRKEWLRTYRPGIYMDYTQPQIPIDDFINRELIQFSMADNIRSIPSVVDGLKPGQRKVVYYCFKRNLVHETKVSRLAGYVASETAYHHGEVSMEQTIVNLAQNFVGSNNINLLMPNGQFGTRSEGGKNASASRYLNTALSPLARVLFNSNDDQLLNYQNDEGQWIEPEYYVPILPMVLVNGAEGIGTGWSTFIPNYNPKDITANLRHMLNGEPLEIMTPWYRGFRGSITKVAPDRYKISGIINQIGENKVEITELPIRFWTQDMKEYLEAGLVGTEKIRKFIVDYESHHGEGNVHFNVTLTEAGMKEALNESLEVKFKLSRTQATSNMIAFDASGRIKKYDSVEDILTEFYEVRLRTYQRRKEHMVNELEKRFDRFSNQARFIHMIIEGELVVSKKKKKDLIVELKEKKFQPISKPKKGHLVDLEVENALAEEEQSGDVSQDEDSDAYNYLLSMPLWSLTYERYVELLKKKDEVMAELDALIKKTPKELWLHDLDAFEHAWNKVMDDIQREMLEEEQSSRDFVNRTKKKPRGKSTGTRKPRAIAGSSSSTAVKKEASSESKPSTTNRKQQTLLEFAASKEPEKSSDINIVKTEDNSHGLSVEENRISKSPGLDSSDSGKSRKRSQSVDSEDAGSKKPVKKIAASASGRGRKTNKPVATTIFSSDDEDDLLPSSLKPSTITSTKASAKNKGKKASSVKKQSPEDDDDDFIIPGSSSTPKASSTNAEPPEDSDSPIRKRPTRRAAATVKTPIYVDPSFDSMDEPSMQDDSFIVDNDEDVDDYDESD.

The segment covering methionine 1–glycine 16 has biased composition (acidic residues). Residues methionine 1–threonine 76 form a disordered region. Residues aspartate 46–glutamate 59 show a composition bias toward polar residues. Positions valine 64 to threonine 76 are enriched in low complexity. Residues asparagine 136, asparagine 165, serine 193–asparagine 195, and glycine 206–lysine 213 contribute to the ATP site. Positions lysine 388–lysine 392 are interaction with DNA. Residue glutamine 421–lysine 423 participates in ATP binding. The region spanning cysteine 499–isoleucine 613 is the Toprim domain. The Mg(2+) site is built by glutamate 505, aspartate 582, and aspartate 584. Residues isoleucine 745–leucine 1195 form the Topo IIA-type catalytic domain. Catalysis depends on tyrosine 835, which acts as the O-(5'-phospho-DNA)-tyrosine intermediate. An interaction with DNA region spans residues lysine 1019 to asparagine 1028. Residues glutamate 1216–asparagine 1225 show a composition bias toward basic and acidic residues. The segment at glutamate 1216 to aspartate 1485 is disordered. Residues arginine 1226 to arginine 1242 are compositionally biased toward basic residues. Residues glutamate 1260–leucine 1273 are compositionally biased toward polar residues. Residues alanine 1278–isoleucine 1307 are compositionally biased toward basic and acidic residues. Serine 1310 and serine 1345 each carry phosphoserine. Residues alanine 1387–serine 1396 are compositionally biased toward basic residues. Positions glycine 1413–alanine 1425 are enriched in polar residues. Residue serine 1433 is modified to Phosphoserine. The segment covering aspartate 1473–aspartate 1485 has biased composition (acidic residues).

Belongs to the type II topoisomerase family. Homodimer. Mg(2+) is required as a cofactor. The cofactor is Mn(2+). It depends on Ca(2+) as a cofactor. Phosphorylated at multiple sites at both extremities of the protein.

The protein resides in the nucleus. The enzyme catalyses ATP-dependent breakage, passage and rejoining of double-stranded DNA.. Control of topological states of DNA by transient breakage and subsequent rejoining of DNA strands. Topoisomerase II makes double-strand breaks. The polypeptide is DNA topoisomerase 2 (top2) (Schizosaccharomyces pombe (strain 972 / ATCC 24843) (Fission yeast)).